The sequence spans 106 residues: Neisseria hypothetical transcription factor (106 aa).

One can recognise an HTH cro/C1-type domain in the interval 26–80 (MRLFRVNKGWSQEELARQCGLDRTYVSAVERKRWNIALSNIEKMAAALGVAAYQL). The segment at residues 37–56 (QEELARQCGLDRTYVSAVER) is a DNA-binding region (H-T-H motif).

As to quaternary structure, homodimer. Can interact with the dimeric form of the DNA mimic protein DMP19 with 1:1 stoichiometry.

The protein localises to the cytoplasm. Its activity is regulated as follows. Repressor activity is inhibited in the presence of the DNA mimic protein DMP19, which interacts with NHTF and prevents binding of NHTF to its DNA-binding sites. Functionally, transcriptional regulator probably involved in the response to nitrogen levels. Down-regulates its own expression as well as the expression of the downstream gene, glnD, which encodes the [Protein-PII] uridylyltransferase, a key enzyme in the nitrogen regulation system. Acts by binding to a specific palindromic DNA sequence (5'-TGTNANTNACA-3') in its 5'-untranslated region. The sequence is that of Neisseria hypothetical transcription factor from Neisseria meningitidis serogroup B (strain ATCC BAA-335 / MC58).